The sequence spans 291 residues: Cell division protein FtsX (291 aa).

Residues 1-18 (MSSNFDKFQKRRLISSYF) lie on the Cytoplasmic side of the membrane. Residues 19 to 39 (SVVLSVFLVLFLLGVLGLFII) form a helical membrane-spanning segment. The Periplasmic portion of the chain corresponds to 40 to 162 (NSKKLADDFK…VNLVNDNIKK (123 aa)). A helical membrane pass occupies residues 163 to 183 (VSMWILIISGFLTVIAVLLIN). Over 184-220 (SSLRLSIHSNRFIIKTMQMVGATKSFIRKPFVMRSVK) the chain is Cytoplasmic. The helical transmembrane segment at 221 to 241 (LGMLGALLAIIALIGLLFYVE) threads the bilayer. The Periplasmic portion of the chain corresponds to 242 to 253 (TNFPGLGILEDK). Residues 254 to 274 (ALIGLVLLAVFGLGVLITWVS) form a helical membrane-spanning segment. Over 275–291 (THFATQRFLNLRTDDLY) the chain is Cytoplasmic.

This sequence belongs to the ABC-4 integral membrane protein family. FtsX subfamily.

Its subcellular location is the cell inner membrane. In terms of biological role, required for cell division and gliding motility. The polypeptide is Cell division protein FtsX (Flavobacterium johnsoniae (strain ATCC 17061 / DSM 2064 / JCM 8514 / BCRC 14874 / CCUG 350202 / NBRC 14942 / NCIMB 11054 / UW101) (Cytophaga johnsonae)).